Reading from the N-terminus, the 87-residue chain is Small ribosomal subunit protein bS18 (87 aa).

The span at 1-10 shows a compositional bias: basic and acidic residues; the sequence is MAGKSSGDRR. Positions 1–23 are disordered; sequence MAGKSSGDRRKPLRGAKGGKNAA.

This sequence belongs to the bacterial ribosomal protein bS18 family. Part of the 30S ribosomal subunit. Forms a tight heterodimer with protein bS6.

Functionally, binds as a heterodimer with protein bS6 to the central domain of the 16S rRNA, where it helps stabilize the platform of the 30S subunit. This Clavibacter michiganensis subsp. michiganensis (strain NCPPB 382) protein is Small ribosomal subunit protein bS18.